The sequence spans 462 residues: Glutamate--tRNA ligase 2 (462 aa).

Residues 8-18 (PSPTGYLHIGG) carry the 'HIGH' region motif. The 'KMSKS' region motif lies at 236 to 240 (KLSKR). Residue lysine 239 participates in ATP binding.

The protein belongs to the class-I aminoacyl-tRNA synthetase family. Glutamate--tRNA ligase type 1 subfamily. Monomer.

The protein localises to the cytoplasm. The catalysed reaction is tRNA(Glu) + L-glutamate + ATP = L-glutamyl-tRNA(Glu) + AMP + diphosphate. In terms of biological role, catalyzes the attachment of glutamate to tRNA(Glu) in a two-step reaction: glutamate is first activated by ATP to form Glu-AMP and then transferred to the acceptor end of tRNA(Glu). The polypeptide is Glutamate--tRNA ligase 2 (Nitratiruptor sp. (strain SB155-2)).